Here is a 314-residue protein sequence, read N- to C-terminus: ATP synthase gamma chain (314 aa).

Belongs to the ATPase gamma chain family. F-type ATPases have 2 components, CF(1) - the catalytic core - and CF(0) - the membrane proton channel. CF(1) has five subunits: alpha(3), beta(3), gamma(1), delta(1), epsilon(1). CF(0) has three main subunits: a, b and c.

It is found in the cellular thylakoid membrane. Functionally, produces ATP from ADP in the presence of a proton gradient across the membrane. The gamma chain is believed to be important in regulating ATPase activity and the flow of protons through the CF(0) complex. This Gloeothece citriformis (strain PCC 7424) (Cyanothece sp. (strain PCC 7424)) protein is ATP synthase gamma chain.